The chain runs to 88 residues: Small ribosomal subunit protein bS16 (88 aa).

Belongs to the bacterial ribosomal protein bS16 family.

The chain is Small ribosomal subunit protein bS16 from Halothermothrix orenii (strain H 168 / OCM 544 / DSM 9562).